A 278-amino-acid chain; its full sequence is Cytoplasmic envelopment protein 1 (278 aa).

The protein belongs to the herpesviridae cytoplasmic envelopment protein 1 family.

The protein resides in the virion. Its subcellular location is the virion tegument. The protein localises to the host cytoplasm. It is found in the host Golgi apparatus. Its function is as follows. Plays a critical role in cytoplasmic virus egress. Participates in the final step of tegumentation and envelope acquisition within the host cytoplasm. The polypeptide is Cytoplasmic envelopment protein 1 (ORF42) (Homo sapiens (Human)).